The chain runs to 394 residues: Protein TsgA homolog (394 aa).

12 helical membrane-spanning segments follow: residues Trp-11 to Met-31, Phe-51 to Pro-71, Leu-76 to Leu-96, Leu-101 to Ile-121, Leu-134 to Met-154, Trp-162 to Phe-182, Ile-206 to Ile-226, Phe-251 to Leu-271, Ile-274 to Asn-294, Ile-302 to Leu-322, Phe-334 to Val-354, and Leu-363 to Val-383.

It belongs to the major facilitator superfamily. TsgA family.

Its subcellular location is the cell inner membrane. The protein is Protein TsgA homolog of Serratia proteamaculans (strain 568).